The sequence spans 215 residues: MSKVYDWFEERLEIQAIADDITSKYVPPHVNIFYCLGGITLTCFLVQVATGFAMTFYYRPTVTEAFASVQYIMTEVNFGWLIRSVHRWSASMMVLMTILHVFRVYLTGGFKKPRELTWVTGVVLAVLTASFGVTGYSLPWDQIGYWAVKIVTGVPEAIPVIGSPLVELLRGSASVGQSTLTRFYSLHTFVLPLLTAVFMLMHFLMIRKQGISGPL.

The chain crosses the membrane as a helical span at residues 32 to 52 (IFYCLGGITLTCFLVQVATGF). Cys35 is a heme c binding site. Heme b is bound by residues His86 and His100. Transmembrane regions (helical) follow at residues 90 to 110 (ASMMVLMTILHVFRVYLTGGF), 116 to 136 (LTWVTGVVLAVLTASFGVTGY), and 186 to 206 (LHTFVLPLLTAVFMLMHFLMI). 2 residues coordinate heme b: His187 and His202.

This sequence belongs to the cytochrome b family. PetB subfamily. The 4 large subunits of the cytochrome b6-f complex are cytochrome b6, subunit IV (17 kDa polypeptide, PetD), cytochrome f and the Rieske protein, while the 4 small subunits are PetG, PetL, PetM and PetN. The complex functions as a dimer. It depends on heme b as a cofactor. Requires heme c as cofactor.

Its subcellular location is the plastid. It localises to the chloroplast thylakoid membrane. Component of the cytochrome b6-f complex, which mediates electron transfer between photosystem II (PSII) and photosystem I (PSI), cyclic electron flow around PSI, and state transitions. The chain is Cytochrome b6 from Citrus sinensis (Sweet orange).